The following is a 340-amino-acid chain: Dihydroorotate dehydrogenase (quinone) (340 aa).

Residues 61 to 65 (AGLDK) and Thr-85 contribute to the FMN site. Lys-65 contacts substrate. 110 to 114 (NRMGF) is a binding site for substrate. FMN-binding residues include Asn-138 and Asn-171. Residue Asn-171 participates in substrate binding. Ser-174 acts as the Nucleophile in catalysis. Residue Asn-176 coordinates substrate. FMN contacts are provided by Lys-216 and Thr-244. Residue 245-246 (NT) coordinates substrate. FMN contacts are provided by residues Gly-267, Gly-296, and 317-318 (YS).

The protein belongs to the dihydroorotate dehydrogenase family. Type 2 subfamily. As to quaternary structure, monomer. It depends on FMN as a cofactor.

The protein resides in the cell membrane. It catalyses the reaction (S)-dihydroorotate + a quinone = orotate + a quinol. Its pathway is pyrimidine metabolism; UMP biosynthesis via de novo pathway; orotate from (S)-dihydroorotate (quinone route): step 1/1. Catalyzes the conversion of dihydroorotate to orotate with quinone as electron acceptor. This is Dihydroorotate dehydrogenase (quinone) from Ectopseudomonas mendocina (strain ymp) (Pseudomonas mendocina).